We begin with the raw amino-acid sequence, 243 residues long: Adenine phosphoribosyltransferase 1, chloroplastic (243 aa).

A chloroplast-targeting transit peptide spans M1–S52. Position 2 is an N-acetylalanine (Q2).

This sequence belongs to the purine/pyrimidine phosphoribosyltransferase family. As to quaternary structure, homodimer.

It localises to the plastid. The protein resides in the chloroplast. Its subcellular location is the cytoplasm. It carries out the reaction AMP + diphosphate = 5-phospho-alpha-D-ribose 1-diphosphate + adenine. The protein operates within purine metabolism; AMP biosynthesis via salvage pathway; AMP from adenine: step 1/1. Its function is as follows. Catalyzes a salvage reaction resulting in the formation of AMP, that is energically less costly than de novo synthesis. Contributes primarily to the recycling of adenine into adenylate nucleotides, but is also involved in the inactivation of cytokinins by phosphoribosylation. Catalyzes the conversion of cytokinins from free bases (active form) to the corresponding nucleotides (inactive form). The chain is Adenine phosphoribosyltransferase 1, chloroplastic (APT1) from Arabidopsis thaliana (Mouse-ear cress).